A 618-amino-acid chain; its full sequence is Prothrombin (618 aa).

Residues 1–24 form the signal peptide; that stretch reads MSHVRGLGLPGCLALAALVSLVHS. The propeptide occupies 25–43; the sequence is QHVFLAPQQALSLLQRVRR. The region spanning 44–90 is the Gla domain; the sequence is ANSGFLEELRKGNLERECVEEQCSYEEAFEALESPQDTDVFWAKYTV. 10 positions are modified to 4-carboxyglutamate: E50, E51, E58, E60, E63, E64, E69, E70, E73, and E76. An intrachain disulfide couples C61 to C66. 10 cysteine pairs are disulfide-bonded: C91-C104, C109-C187, C130-C170, C158-C182, C215-C293, C236-C276, C264-C288, C333-C479, C388-C404, and C533-C547. 2 Kringle domains span residues 109–187 and 215–292; these read CAMD…VPVC and CLTE…NLNY. Residues N122 and N144 are each glycosylated (N-linked (GlcNAc...) asparagine). In terms of domain architecture, Peptidase S1 spans 361-615; that stretch reads IVEGWDAEKG…LKRWIQKVID (255 aa). H403 acts as the Charge relay system in catalysis. The N-linked (GlcNAc...) asparagine glycan is linked to N413. D459 acts as the Charge relay system in catalysis. Residues 548–570 form a high affinity receptor-binding region which is also known as the TP508 peptide region; sequence AGFKVNDTKRGDACEGDSGGPFV. An N-linked (GlcNAc...) asparagine glycan is attached at N553. A disulfide bond links C561 and C591. Catalysis depends on S565, which acts as the Charge relay system.

Belongs to the peptidase S1 family. Heterodimer (named alpha-thrombin) of a light and a heavy chain; disulfide-linked. Forms a heterodimer with SERPINA5. In plasma, interacts (via N-terminus) with alpha-1-microglobulin; this interaction does not prevent the activation of prothrombin to thrombin. In terms of processing, the gamma-carboxyglutamyl residues, which bind calcium ions, result from the carboxylation of glutamyl residues by a microsomal enzyme, the vitamin K-dependent carboxylase. The modified residues are necessary for the calcium-dependent interaction with a negatively charged phospholipid surface, which is essential for the conversion of prothrombin to thrombin. In the penultimate step of the coagulation cascade, prothrombin is converted to thrombin by the prothrombinase complex composed of factor Xa (F10), cofactor Va (F5), and phospholipids. This activation requires factor Xa-catalyzed sequential cleavage at 2 sites, Arg-311 and Arg-360, along 2 possible pathways. In the first pathway, the first cleavage occurs at Arg-311, leading to the formation of the inactive intermediate prethrombin-2. This pathway preferentially occurs on platelets and in the absence of cofactor Va. In the second pathway, the first cleavage occurs at Arg-360, which separates protease domain into 2 chains that remain connected through a disulfide bond and generates the active intermediate meizothrombin. The presence of cofactor Va directs activation along the meizothrombin pathway and greatly accelerates the rate of cleavage at Arg-360, but has a smaller effect on the cleavage of meizothrombin at Arg-311. Meizothrombin accumulates as an intermediate when prothrombinase is assembled on the membrane of red blood cells.

It catalyses the reaction Selective cleavage of Arg-|-Gly bonds in fibrinogen to form fibrin and release fibrinopeptides A and B.. With respect to regulation, activity is promoted in the presence of negatively charged surfaces, such as polyphosphate and dextran sulfate. Inhibited by SERPINA5. Functionally, thrombin, which cleaves bonds after Arg and Lys, converts fibrinogen to fibrin and activates factors V, VII, VIII, XIII, and, in complex with thrombomodulin, protein C. Functions in blood homeostasis, inflammation and wound healing. Activates coagulation factor XI (F11); activation is promoted by the contact with negatively charged surfaces. Triggers the production of pro-inflammatory cytokines, such as MCP-1/CCL2 and IL8/CXCL8, in endothelial cells. This chain is Prothrombin (F2), found in Mus musculus (Mouse).